Here is a 118-residue protein sequence, read N- to C-terminus: Holo-[acyl-carrier-protein] synthase (118 aa).

Mg(2+) contacts are provided by Asp8 and Glu60.

It belongs to the P-Pant transferase superfamily. AcpS family. Requires Mg(2+) as cofactor.

Its subcellular location is the cytoplasm. The enzyme catalyses apo-[ACP] + CoA = holo-[ACP] + adenosine 3',5'-bisphosphate + H(+). Functionally, transfers the 4'-phosphopantetheine moiety from coenzyme A to a Ser of acyl-carrier-protein. In Wolbachia sp. subsp. Drosophila simulans (strain wRi), this protein is Holo-[acyl-carrier-protein] synthase.